A 692-amino-acid chain; its full sequence is Elongation factor G (692 aa).

The 275-residue stretch at 8–282 folds into the tr-type G domain; it reads EKTRNIGIMA…AVIDYLPSPL (275 aa). GTP is bound by residues 17-24, 81-85, and 135-138; these read AHVDAGKT, DTPGH, and NKMD.

It belongs to the TRAFAC class translation factor GTPase superfamily. Classic translation factor GTPase family. EF-G/EF-2 subfamily.

It is found in the cytoplasm. Its function is as follows. Catalyzes the GTP-dependent ribosomal translocation step during translation elongation. During this step, the ribosome changes from the pre-translocational (PRE) to the post-translocational (POST) state as the newly formed A-site-bound peptidyl-tRNA and P-site-bound deacylated tRNA move to the P and E sites, respectively. Catalyzes the coordinated movement of the two tRNA molecules, the mRNA and conformational changes in the ribosome. This Streptococcus agalactiae serotype Ia (strain ATCC 27591 / A909 / CDC SS700) protein is Elongation factor G.